The sequence spans 262 residues: GTP cyclohydrolase 1 type 2 homolog (262 aa).

4 residues coordinate a divalent metal cation: His-65, Asp-102, His-222, and Glu-225.

This sequence belongs to the GTP cyclohydrolase I type 2/NIF3 family. In terms of assembly, homohexamer.

This chain is GTP cyclohydrolase 1 type 2 homolog, found in Streptococcus pyogenes serotype M6 (strain ATCC BAA-946 / MGAS10394).